Consider the following 547-residue polypeptide: NXPE family member 1 (547 aa).

A signal peptide spans 1–21; that stretch reads MSSNTMLQKTLLILISFSVVT. Asparagine 39 and asparagine 211 each carry an N-linked (GlcNAc...) asparagine glycan.

This sequence belongs to the NXPE family.

The protein resides in the secreted. This chain is NXPE family member 1 (NXPE1), found in Homo sapiens (Human).